The following is a 571-amino-acid chain: MTLIGWFQIALFCAVVLALVKPLGAYMTRVFAGERTILSPLLAPIERGLYRAAGIDARHEQTWLGYGLAMLVFHALGFVSLYAILRLQDGLPLNPMGQAAVAPDLALNTAVSFVTNTNWQNYGGESTLSYLSQMLGLTPQNFLSAATGLALAVALTRGFARASSRTVGSFWVDLTRCTLYVLLPLCIGLTLFYVWQGMPQTLGASVDATTLEGARQTIAVGPVASQVAIKMLGTNGGGFFNANAAHPFENPTALANLVQMVTIFALGAAMTNVFGRMVGDERQGWAILAAMGVLFLAGVAVTYASEAAGSPVLNGLGFSAGNMEGKEIRFGIVASALFAVVTTAASCGAVNAMHDSFTALGGLIPMLNMQLGEIIVGGVGAGLYGMLVFVLVALFVAGLMVGRTPEYLGKKIEAKEVKMAMLAILCLPLMMLGLAALATVLPAGLAGPANAGPHGFSEILYAFTSAAANNGSAFGGLTGNTLFYNTTLALGMAVGRFMVIVPALAIAGSLAAKKTLPASAGTLPTHGGLFVGLLVGVILIVGGLTFFPALALGPVVEHLAGAAGQTFAAGG.

11 helical membrane-spanning segments follow: residues 3–23 (LIGWFQIALFCAVVLALVKPL), 64–84 (LGYGLAMLVFHALGFVSLYAI), 135–155 (LGLTPQNFLSAATGLALAVAL), 179–199 (LYVLLPLCIGLTLFYVWQGMP), 254–274 (LANLVQMVTIFALGAAMTNVF), 284–304 (GWAILAAMGVLFLAGVAVTYA), 330–350 (FGIVASALFAVVTTAASCGAV), 357–376 (FTALGGLIPMLNMQLGEIIV), 421–441 (MLAILCLPLMMLGLAALATVL), 488–508 (LALGMAVGRFMVIVPALAIAG), and 527–547 (GGLFVGLLVGVILIVGGLTFF).

It belongs to the KdpA family. In terms of assembly, the system is composed of three essential subunits: KdpA, KdpB and KdpC.

It localises to the cell inner membrane. In terms of biological role, part of the high-affinity ATP-driven potassium transport (or Kdp) system, which catalyzes the hydrolysis of ATP coupled with the electrogenic transport of potassium into the cytoplasm. This subunit binds the periplasmic potassium ions and delivers the ions to the membrane domain of KdpB through an intramembrane tunnel. The polypeptide is Potassium-transporting ATPase potassium-binding subunit (Methylorubrum populi (strain ATCC BAA-705 / NCIMB 13946 / BJ001) (Methylobacterium populi)).